The sequence spans 375 residues: Naringenin 7-O-methyltransferase (375 aa).

136–142 (LNLDKVF) is a binding site for substrate. The interval 168–188 (LFQYLGQDGNEPSNTLFNQAM) is substrate binding. Glycine 219, aspartate 242, methionine 263, and lysine 276 together coordinate S-adenosyl-L-methionine. Histidine 280 acts as the Proton acceptor in catalysis.

It belongs to the class I-like SAM-binding methyltransferase superfamily. Cation-independent O-methyltransferase family. COMT subfamily.

The catalysed reaction is (2S)-naringenin + S-adenosyl-L-methionine = (2S)-sakuranetin + S-adenosyl-L-homocysteine + H(+). Functionally, S-adenosyl-L-methionine-dependent methyltransferase involved in the biosynthesis of the sakuranetin, an inducible defense mechanism of O.sativa against pathogen attack. The polypeptide is Naringenin 7-O-methyltransferase (Oryza sativa subsp. japonica (Rice)).